Here is a 125-residue protein sequence, read N- to C-terminus: Large ribosomal subunit protein bL12 (125 aa).

Belongs to the bacterial ribosomal protein bL12 family. As to quaternary structure, homodimer. Part of the ribosomal stalk of the 50S ribosomal subunit. Forms a multimeric L10(L12)X complex, where L10 forms an elongated spine to which 2 to 4 L12 dimers bind in a sequential fashion. Binds GTP-bound translation factors.

Its function is as follows. Forms part of the ribosomal stalk which helps the ribosome interact with GTP-bound translation factors. Is thus essential for accurate translation. This is Large ribosomal subunit protein bL12 from Thioalkalivibrio sulfidiphilus (strain HL-EbGR7).